Here is a 121-residue protein sequence, read N- to C-terminus: Large ribosomal subunit protein uL14 (121 aa).

Belongs to the universal ribosomal protein uL14 family. Part of the 50S ribosomal subunit. Forms a cluster with proteins L3 and L19. In the 70S ribosome, L14 and L19 interact and together make contacts with the 16S rRNA in bridges B5 and B8.

Binds to 23S rRNA. Forms part of two intersubunit bridges in the 70S ribosome. The sequence is that of Large ribosomal subunit protein uL14 from Parasynechococcus marenigrum (strain WH8102).